A 133-amino-acid polypeptide reads, in one-letter code: Small ribosomal subunit protein eS8 (133 aa).

The interval 1–34 (MGVWHGRSLRKPTGGRIRPHRKKRKFEMGNPPTE) is disordered.

It belongs to the eukaryotic ribosomal protein eS8 family. Part of the 30S ribosomal subunit.

The polypeptide is Small ribosomal subunit protein eS8 (Methanopyrus kandleri (strain AV19 / DSM 6324 / JCM 9639 / NBRC 100938)).